Reading from the N-terminus, the 680-residue chain is Structure-specific endonuclease subunit SLX4 (680 aa).

Disordered regions lie at residues 15 to 92 (EVAK…EPVV), 141 to 183 (ESSS…STQQ), and 450 to 490 (LGSG…ATRL). A compositionally biased stretch (acidic residues) spans 22 to 33 (DSDEPIIDEDDL). Basic and acidic residues predominate over residues 60 to 86 (NNSKDTFKETPLELVDKEEAIEDKAPN). Residues 156 to 174 (LKSKKITKPKLTKTSKRTK) show a composition bias toward basic residues. Over residues 473–490 (TVISRSPQSTRTPQATRL) the composition is skewed to polar residues.

The protein belongs to the SLX4 family. As to quaternary structure, forms a heterodimer with SLX1. In terms of processing, phosphorylated in response to DNA damage.

It localises to the nucleus. Regulatory subunit of the SLX1-SLX4 structure-specific endonuclease that resolves DNA secondary structures generated during DNA repair and recombination. Has endonuclease activity towards branched DNA substrates, introducing single-strand cuts in duplex DNA close to junctions with ss-DNA. The chain is Structure-specific endonuclease subunit SLX4 from Vanderwaltozyma polyspora (strain ATCC 22028 / DSM 70294 / BCRC 21397 / CBS 2163 / NBRC 10782 / NRRL Y-8283 / UCD 57-17) (Kluyveromyces polysporus).